Consider the following 508-residue polypeptide: Vacuolar serine-type carboxypeptidase ATG42 (508 aa).

The first 24 residues, 1-24 (MKYLNLVFVLQLLISIKYASFGRA), serve as a signal peptide directing secretion. Disulfide bonds link cysteine 132–cysteine 375, cysteine 267–cysteine 281, cysteine 291–cysteine 314, cysteine 298–cysteine 307, and cysteine 336–cysteine 345. An N-linked (GlcNAc...) asparagine glycan is attached at asparagine 163. Residue serine 219 is part of the active site. An N-linked (GlcNAc...) asparagine glycan is attached at asparagine 242. Asparagine 339 and asparagine 371 each carry an N-linked (GlcNAc...) asparagine glycan. Aspartate 415 is a catalytic residue. Cysteine 418 serves as a coordination point for substrate. Histidine 474 is a catalytic residue. Methionine 475 contacts substrate.

This sequence belongs to the peptidase S10 family.

The protein localises to the vacuole lumen. The catalysed reaction is Release of a C-terminal amino acid with broad specificity.. Its function is as follows. Vacuolar serine-type carboxypeptidase involved in vacuolar zymogen activation, breakdown of the autophagic body, and autophagosome-dependent protein synthesis. Plays a key role in phytochelatin (PC) synthesis from glutathione (GSH) by cleaving the Gly from GSH and form the PC-peptides of the structure (gamma-Glu-Cys)2-Gly. Also involved in resistance to xenobiotics via the degradation of glutathione-S-conjugates. The protein is Vacuolar serine-type carboxypeptidase ATG42 of Saccharomyces cerevisiae (strain ATCC 204508 / S288c) (Baker's yeast).